The sequence spans 253 residues: Ribulose bisphosphate carboxylase large chain (253 aa).

2 residues coordinate substrate: N35 and T85. Residue K87 is the Proton acceptor of the active site. K89 lines the substrate pocket. Mg(2+) is bound by residues K113, D115, and E116. Residue K113 is modified to N6-carboxylysine. The active-site Proton acceptor is the H206. Residues R207 and H239 each contribute to the substrate site.

The protein belongs to the RuBisCO large chain family. Type I subfamily. As to quaternary structure, heterohexadecamer of 8 large chains and 8 small chains; disulfide-linked. The disulfide link is formed within the large subunit homodimers. Mg(2+) serves as cofactor. Post-translationally, the disulfide bond which can form in the large chain dimeric partners within the hexadecamer appears to be associated with oxidative stress and protein turnover.

It is found in the plastid. The protein localises to the chloroplast. The enzyme catalyses 2 (2R)-3-phosphoglycerate + 2 H(+) = D-ribulose 1,5-bisphosphate + CO2 + H2O. The catalysed reaction is D-ribulose 1,5-bisphosphate + O2 = 2-phosphoglycolate + (2R)-3-phosphoglycerate + 2 H(+). Its function is as follows. RuBisCO catalyzes two reactions: the carboxylation of D-ribulose 1,5-bisphosphate, the primary event in carbon dioxide fixation, as well as the oxidative fragmentation of the pentose substrate in the photorespiration process. Both reactions occur simultaneously and in competition at the same active site. This Magnolia latahensis (Apocynophyllum latahense) protein is Ribulose bisphosphate carboxylase large chain (rbcL).